Here is a 1059-residue protein sequence, read N- to C-terminus: Isoleucine--tRNA ligase (1059 aa).

Positions 47-57 (PYTTGHIHLGT) match the 'HIGH' region motif. The 'KMSKS' region motif lies at 591–595 (KMSKS). Lys594 lines the ATP pocket.

The protein belongs to the class-I aminoacyl-tRNA synthetase family. IleS type 2 subfamily. Monomer. The cofactor is Zn(2+).

The protein resides in the cytoplasm. The enzyme catalyses tRNA(Ile) + L-isoleucine + ATP = L-isoleucyl-tRNA(Ile) + AMP + diphosphate. Catalyzes the attachment of isoleucine to tRNA(Ile). As IleRS can inadvertently accommodate and process structurally similar amino acids such as valine, to avoid such errors it has two additional distinct tRNA(Ile)-dependent editing activities. One activity is designated as 'pretransfer' editing and involves the hydrolysis of activated Val-AMP. The other activity is designated 'posttransfer' editing and involves deacylation of mischarged Val-tRNA(Ile). In Methanoculleus marisnigri (strain ATCC 35101 / DSM 1498 / JR1), this protein is Isoleucine--tRNA ligase.